Reading from the N-terminus, the 182-residue chain is Protein canopy homolog 2 (182 aa).

The signal sequence occupies residues 1 to 20; it reads MKGWGWLALLLGVLLGTAWA. One can recognise a Saposin B-type domain in the interval 24–175; the sequence is QDLHCGACRA…KRTDLCDHAL (152 aa). Intrachain disulfides connect Cys28–Cys171, Cys31–Cys164, and Cys86–Cys137. At Ser115 the chain carries Phosphoserine. A Prevents secretion from ER motif is present at residues 179–182; the sequence is HDEL.

Belongs to the canopy family. As to quaternary structure, interacts with MYLIP/MIR.

The protein resides in the endoplasmic reticulum. Functionally, positive regulator of neurite outgrowth by stabilizing myosin regulatory light chain (MRLC). It prevents MIR-mediated MRLC ubiquitination and its subsequent proteasomal degradation. The chain is Protein canopy homolog 2 (Cnpy2) from Mus musculus (Mouse).